The chain runs to 469 residues: F-box only protein 3 (469 aa).

The F-box domain maps to 10–56 (PLTLESLPTDPLLLILSFLDYRDLINCCYVSRRLSQLSSHDPLWRRH). Positions 278–408 (VATTGDITVS…FHMACPTFRV (131 aa)) constitute an ApaG domain. Positions 419-449 (EYEEMEEEEEEEEEEDDDDSADMDESDDDEE) are enriched in acidic residues. Positions 419–454 (EYEEMEEEEEEEEEEDDDDSADMDESDDDEEERQRR) are disordered.

Part of a SCF (SKP1-cullin-F-box) protein ligase complex SCF(FBXO3) consisting of FBXO3, SKP1, CUL1 and RBX1. Interacts with PML, interaction is direct and takes place either alone or within the SCF complex.

Its subcellular location is the nucleus. Its pathway is protein modification; protein ubiquitination. Functionally, substrate recognition component of the SCF (SKP1-CUL1-F-box protein)-type E3 ubiquitin ligase complex, SCF(FBXO3), which mediates the ubiquitination and subsequent proteasomal degradation of target proteins. Mediates the ubiquitination of HIPK2 and probably that of EP300, leading to rapid degradation by the proteasome. In the presence of PML, HIPK2 ubiquitination still occurs, but degradation is prevented. PML, HIPK2 and FBXO3 may act synergically to activate p53/TP53-dependent transactivation. The SCF(FBXO3) also acts as a regulator of inflammation by mediating ubiquitination and degradation of FBXL2 in response to lipopolysaccharide (LPS). The SCF(FBXO3) complex specifically recognizes FBXL2 phosphorylated at 'Thr-404' and promotes its ubiquitination. In Bos taurus (Bovine), this protein is F-box only protein 3 (FBXO3).